The primary structure comprises 121 residues: Basic phospholipase A2 homolog BaTX (121 aa).

7 cysteine pairs are disulfide-bonded: C26–C115, C28–C44, C43–C95, C49–C121, C50–C88, C57–C81, and C75–C86. The important for membrane-damaging activities in eukaryotes and bacteria; heparin-binding stretch occupies residues 105–117 (KKYRYYLKPLCKK).

Belongs to the phospholipase A2 family. Group II subfamily. K49 sub-subfamily. Homodimer; non-covalently linked. In terms of tissue distribution, expressed by the venom gland.

It is found in the secreted. In terms of biological role, snake venom phospholipase A2 homolog that lacks enzymatic activity. Is myotoxic and displays edema-inducing activities. In vitro, produced time-dependent, irreversible neuromuscular blockade in isolated mouse phrenic nerve-diaphragm and chick biventer cervicis preparations. A model of myotoxic mechanism has been proposed: an apo Lys49-PLA2 is activated by the entrance of a hydrophobic molecule (e.g. fatty acid) at the hydrophobic channel of the protein leading to a reorientation of a monomer. This reorientation causes a transition between 'inactive' to 'active' states, causing alignment of C-terminal and membrane-docking sites (MDoS) side-by-side and putting the membrane-disruption sites (MDiS) in the same plane, exposed to solvent and in a symmetric position for both monomers. The MDoS region stabilizes the toxin on membrane by the interaction of charged residues with phospholipid head groups. Subsequently, the MDiS region destabilizes the membrane with penetration of hydrophobic residues. This insertion causes a disorganization of the membrane, allowing an uncontrolled influx of ions (i.e. calcium and sodium), and eventually triggering irreversible intracellular alterations and cell death. The sequence is that of Basic phospholipase A2 homolog BaTX from Bothrops alternatus (Urutu).